Here is a 154-residue protein sequence, read N- to C-terminus: Aspartate 1-decarboxylase 1 (154 aa).

The active-site Schiff-base intermediate with substrate; via pyruvic acid is serine 26. The residue at position 26 (serine 26) is a Pyruvic acid (Ser). Residue threonine 58 participates in substrate binding. The active-site Proton donor is tyrosine 59. 74 to 76 contributes to the substrate binding site; the sequence is GAA. Residues 129–154 form a disordered region; it reads VGLVRGDTNSPQPSLSEQAGDPRRAQ. The segment covering 135–145 has biased composition (polar residues); the sequence is DTNSPQPSLSE.

It belongs to the PanD family. In terms of assembly, heterooctamer of four alpha and four beta subunits. Requires pyruvate as cofactor. Post-translationally, is synthesized initially as an inactive proenzyme, which is activated by self-cleavage at a specific serine bond to produce a beta-subunit with a hydroxyl group at its C-terminus and an alpha-subunit with a pyruvoyl group at its N-terminus.

It is found in the cytoplasm. It catalyses the reaction L-aspartate + H(+) = beta-alanine + CO2. Its pathway is cofactor biosynthesis; (R)-pantothenate biosynthesis; beta-alanine from L-aspartate: step 1/1. Its function is as follows. Catalyzes the pyruvoyl-dependent decarboxylation of aspartate to produce beta-alanine. In Frankia casuarinae (strain DSM 45818 / CECT 9043 / HFP020203 / CcI3), this protein is Aspartate 1-decarboxylase 1.